A 265-amino-acid chain; its full sequence is Undecaprenyl-diphosphatase (265 aa).

8 helical membrane passes run 1-21 (MDWL…FLPI), 40-60 (GLAF…LAFH), 87-107 (WAVI…ENVI), 113-133 (ASLV…WADV), 151-173 (IIGF…TITA), 188-208 (SFLL…VELI), 214-234 (VAWG…WLCI), and 244-264 (IGML…LVWV).

The protein belongs to the UppP family.

The protein localises to the cell inner membrane. It catalyses the reaction di-trans,octa-cis-undecaprenyl diphosphate + H2O = di-trans,octa-cis-undecaprenyl phosphate + phosphate + H(+). Catalyzes the dephosphorylation of undecaprenyl diphosphate (UPP). Confers resistance to bacitracin. In Chromohalobacter salexigens (strain ATCC BAA-138 / DSM 3043 / CIP 106854 / NCIMB 13768 / 1H11), this protein is Undecaprenyl-diphosphatase.